A 557-amino-acid chain; its full sequence is Dihydroxy-acid dehydratase (557 aa).

Asp-78 provides a ligand contact to Mg(2+). Cys-119 serves as a coordination point for [2Fe-2S] cluster. Residues Asp-120 and Lys-121 each coordinate Mg(2+). Lys-121 is subject to N6-carboxylysine. Cys-192 contacts [2Fe-2S] cluster. Glu-442 is a binding site for Mg(2+). Ser-468 functions as the Proton acceptor in the catalytic mechanism.

It belongs to the IlvD/Edd family. Homodimer. [2Fe-2S] cluster serves as cofactor. Mg(2+) is required as a cofactor.

The enzyme catalyses (2R)-2,3-dihydroxy-3-methylbutanoate = 3-methyl-2-oxobutanoate + H2O. It carries out the reaction (2R,3R)-2,3-dihydroxy-3-methylpentanoate = (S)-3-methyl-2-oxopentanoate + H2O. It participates in amino-acid biosynthesis; L-isoleucine biosynthesis; L-isoleucine from 2-oxobutanoate: step 3/4. The protein operates within amino-acid biosynthesis; L-valine biosynthesis; L-valine from pyruvate: step 3/4. Its function is as follows. Functions in the biosynthesis of branched-chain amino acids. Catalyzes the dehydration of (2R,3R)-2,3-dihydroxy-3-methylpentanoate (2,3-dihydroxy-3-methylvalerate) into 2-oxo-3-methylpentanoate (2-oxo-3-methylvalerate) and of (2R)-2,3-dihydroxy-3-methylbutanoate (2,3-dihydroxyisovalerate) into 2-oxo-3-methylbutanoate (2-oxoisovalerate), the penultimate precursor to L-isoleucine and L-valine, respectively. The polypeptide is Dihydroxy-acid dehydratase (Bacillus cereus (strain AH187)).